The primary structure comprises 426 residues: Dihydroorotase (426 aa).

Zn(2+) is bound by residues His-58 and His-60. Residues 60–62 (HLR) and Asn-92 each bind substrate. Zn(2+)-binding residues include Asp-150, His-177, and His-230. A substrate-binding site is contributed by Asn-276. Position 303 (Asp-303) interacts with Zn(2+). Asp-303 is an active-site residue. His-307 serves as a coordination point for substrate.

This sequence belongs to the metallo-dependent hydrolases superfamily. DHOase family. Class I DHOase subfamily. Zn(2+) is required as a cofactor.

It carries out the reaction (S)-dihydroorotate + H2O = N-carbamoyl-L-aspartate + H(+). It participates in pyrimidine metabolism; UMP biosynthesis via de novo pathway; (S)-dihydroorotate from bicarbonate: step 3/3. Catalyzes the reversible cyclization of carbamoyl aspartate to dihydroorotate. In Acetivibrio thermocellus (strain ATCC 27405 / DSM 1237 / JCM 9322 / NBRC 103400 / NCIMB 10682 / NRRL B-4536 / VPI 7372) (Clostridium thermocellum), this protein is Dihydroorotase.